A 199-amino-acid chain; its full sequence is MNSNSLSRFTSIVRTTSIRGFHDRSSVPRVVDDREKSSAKYNDAGYTFRYHQQGVDPLPRIPDCKVPVARPAYKVRDQWSDEAARFGQNDYIDLLGDGSVHPAQLQYHTPTWLRGFPGQHKANELIKLIHYRNLYDAKLKQNSPKRWHELRKRIKYLMMQHNYNKQDEIGRERNLGLWEEEPDYTYKDKSRRSFKDEIH.

The N-terminal 15 residues, 1 to 15 (MNSNSLSRFTSIVRT), are a transit peptide targeting the mitochondrion.

The protein belongs to the mitochondrion-specific ribosomal protein mL51 family. Component of the mitochondrial ribosome large subunit (39S) which comprises a 16S rRNA and about 50 distinct proteins.

It localises to the mitochondrion. The chain is Large ribosomal subunit protein mL51 (mrpl-51) from Caenorhabditis elegans.